The chain runs to 83 residues: MQNDAGEFVDLYVPRKCSASNRIIGAKDHASIQINIAEVDKVTGRFNSQYKTYAICGAIRRMGESDDSIMRLAKNDGIVSKNF.

The protein belongs to the eukaryotic ribosomal protein eS21 family. Component of the 40S small ribosomal subunit.

It localises to the cytoplasm. It is found in the cytosol. The protein resides in the rough endoplasmic reticulum. Its function is as follows. Component of the small ribosomal subunit. The ribosome is a large ribonucleoprotein complex responsible for the synthesis of proteins in the cell. The chain is Small ribosomal subunit protein eS21 (rps21) from Xenopus laevis (African clawed frog).